The following is a 396-amino-acid chain: Elongation factor Tu (396 aa).

Residues Lys-11–Glu-205 form the tr-type G domain. A G1 region spans residues Gly-20–Thr-27. Residue Gly-20–Thr-27 participates in GTP binding. Thr-27 provides a ligand contact to Mg(2+). Residues Gly-61–Asn-65 are G2. The segment at Asp-82–Gly-85 is G3. Residues Asp-82 to His-86 and Asn-137 to Asp-140 contribute to the GTP site. Positions Asn-137–Asp-140 are G4. The tract at residues Ser-175 to Leu-177 is G5.

The protein belongs to the TRAFAC class translation factor GTPase superfamily. Classic translation factor GTPase family. EF-Tu/EF-1A subfamily. In terms of assembly, monomer.

It is found in the cytoplasm. It catalyses the reaction GTP + H2O = GDP + phosphate + H(+). Its function is as follows. GTP hydrolase that promotes the GTP-dependent binding of aminoacyl-tRNA to the A-site of ribosomes during protein biosynthesis. In Latilactobacillus sakei subsp. sakei (strain 23K) (Lactobacillus sakei subsp. sakei), this protein is Elongation factor Tu.